Here is a 360-residue protein sequence, read N- to C-terminus: Cytokine receptor-like factor 2 (360 aa).

The first 18 residues, 1 to 18 (MRAVTWAIVAMLLPRVLG), serve as a signal peptide directing secretion. Topologically, residues 27 to 238 (TGGVGDTLSV…PRTPGTPTPP (212 aa)) are extracellular. N62 is a glycosylation site (N-linked (GlcNAc...) asparagine). The cysteines at positions 77 and 90 are disulfide-linked. The Fibronectin type-III domain maps to 123–214 (RPRPPWNVTL…PSKWTGVASL (92 aa)). N129 and N174 each carry an N-linked (GlcNAc...) asparagine glycan. C185 and C223 form a disulfide bridge. A WSXWS motif motif is present at residues 205-209 (PSKWT). A helical transmembrane segment spans residues 239-259 (LALACGLAVALLTLVLLLALL). Over 260–360 (RMRRVKEALL…LMGDSGYTTL (101 aa)) the chain is Cytoplasmic. Positions 268–276 (LLPGVPDPR) match the Box 1 motif motif.

It belongs to the type I cytokine receptor family. Type 5 subfamily. In terms of assembly, heterodimer of CRLF2 and IL7R. Expressed in all tissues examined including brain, thymus, lung, heart, muscle, stomach, small intestine, liver, kidney, spleen, testis and skin. Highest levels in thymus, liver and testis.

Its subcellular location is the membrane. In terms of biological role, receptor for thymic stromal lymphopoietin (TSLP). Forms a functional complex with TSLP and IL7R which is capable of stimulating cell proliferation through activation of STAT3 and STAT5. Also activates JAK2. Implicated in the development of the hematopoietic system. The sequence is that of Cytokine receptor-like factor 2 (Crlf2) from Rattus norvegicus (Rat).